A 297-amino-acid chain; its full sequence is MNKILNFKKKLQNNNNNTNNNNNNNNPKASILKNNNNDNTNDNLKSKIVVKSTPVIQKSSSFANVPNSINVNTSSSGNKNGDKPILLQSMFNKGKRSNEITNRKIPPPFSEDSFYKSGVTSKVSTTTTTTSSTSKPILPQTITKPNKTNETIVPIPPIKKPISNNNINYNNINIQQSSSTCTISNRVRDNLFLLKEESKSEYNIRVNEIEKKVISNNNIDYNDPYTQTIQKIIMVEKEMIDTFSAMIEFQPLQNLAQTQILKSSSRLSSNNNNNNNNNNNNNNNNSNLLFFFDDQNN.

4 disordered regions span residues 12–43 (QNNNNNTNNNNNNNNPKASILKNNNNDNTNDN), 65–85 (VPNSINVNTSSSGNKNGDKPI), 122–151 (KVSTTTTTTSSTSKPILPQTITKPNKTNET), and 265–297 (SRLSSNNNNNNNNNNNNNNNNSNLLFFFDDQNN). Polar residues predominate over residues 65 to 79 (VPNSINVNTSSSGNK). The span at 122–135 (KVSTTTTTTSSTSK) shows a compositional bias: low complexity. Polar residues predominate over residues 140-151 (QTITKPNKTNET). A compositionally biased stretch (low complexity) spans 268-287 (SSNNNNNNNNNNNNNNNNSN).

This is an uncharacterized protein from Dictyostelium discoideum (Social amoeba).